We begin with the raw amino-acid sequence, 288 residues long: Protease HtpX (288 aa).

2 consecutive transmembrane segments (helical) span residues 4–24 and 33–53; these read ILLF…ILTL and VGLL…SLLM. His-139 contributes to the Zn(2+) binding site. Glu-140 is an active-site residue. Position 143 (His-143) interacts with Zn(2+). Helical transmembrane passes span 146 to 166 and 186 to 206; these read SGDM…VIFI and IYFM…SMIA. Position 214 (Glu-214) interacts with Zn(2+).

This sequence belongs to the peptidase M48B family. The cofactor is Zn(2+).

Its subcellular location is the cell inner membrane. The chain is Protease HtpX from Histophilus somni (strain 2336) (Haemophilus somnus).